Consider the following 156-residue polypeptide: Transcriptional repressor NrdR (156 aa).

The segment at 3–34 (CPFCSETDTKVIDSRLVADGAQVRRRRECLTC) is a zinc-finger region. Residues 49–139 (PRVIKQDGTR…VYRSFQDLSE (91 aa)) enclose the ATP-cone domain.

The protein belongs to the NrdR family. It depends on Zn(2+) as a cofactor.

Negatively regulates transcription of bacterial ribonucleotide reductase nrd genes and operons by binding to NrdR-boxes. The polypeptide is Transcriptional repressor NrdR (Saccharophagus degradans (strain 2-40 / ATCC 43961 / DSM 17024)).